Here is a 174-residue protein sequence, read N- to C-terminus: D(1B) dopamine receptor (174 aa).

A helical membrane pass occupies residues 1-10 (SILNLCIISV). Residues 11–32 (DRYWAISRPFCYERKMTQRVAL) lie on the Cytoplasmic side of the membrane. A helical transmembrane segment spans residues 33–54 (VMVGLAWTLSILISFIPVQLHW). At 55–96 (HRDKVGSRDGLDPPSNLANGTPWEEAGESDRSAENCDSSLNR) the chain is on the extracellular side. The disordered stretch occupies residues 64–88 (GLDPPSNLANGTPWEEAGESDRSAE). N-linked (GlcNAc...) asparagine glycosylation is present at N95. A helical membrane pass occupies residues 97–119 (TYAISSSLISFYIPVAIMIVTYT). The Cytoplasmic segment spans residues 120–169 (RIYRIAQVQIRRISSLERAAEHAQSCRSREACAPDSGLRASIKKETKVLK). The helical transmembrane segment at 170-174 (TLSVI) threads the bilayer.

Belongs to the G-protein coupled receptor 1 family.

It localises to the cell membrane. In terms of biological role, dopamine receptor whose activity is mediated by G proteins which activate adenylyl cyclase. This Bos taurus (Bovine) protein is D(1B) dopamine receptor (DRD5).